The following is a 214-amino-acid chain: Adenylate kinase (214 aa).

10–15 provides a ligand contact to ATP; it reads GAGKGT. The NMP stretch occupies residues 30–59; it reads STGDMFREAVASKSELGKKVEEILKRGDLV. AMP contacts are provided by residues T31, R36, 57-59, 85-88, and Q92; these read DLV and GFPR. Positions 126-163 are LID; sequence NRRICSNCGKIYNLITLPPKVDGKCDVCGGTLYQREDD. R127 provides a ligand contact to ATP. Residues C130 and C133 each contribute to the Zn(2+) site. 136–137 provides a ligand contact to ATP; sequence IY. Zn(2+) contacts are provided by C150 and C153. 2 residues coordinate AMP: R160 and R171. L199 contacts ATP.

The protein belongs to the adenylate kinase family. Monomer.

The protein resides in the cytoplasm. It carries out the reaction AMP + ATP = 2 ADP. It participates in purine metabolism; AMP biosynthesis via salvage pathway; AMP from ADP: step 1/1. In terms of biological role, catalyzes the reversible transfer of the terminal phosphate group between ATP and AMP. Plays an important role in cellular energy homeostasis and in adenine nucleotide metabolism. In Thermosipho africanus (strain TCF52B), this protein is Adenylate kinase.